The chain runs to 301 residues: NADH-cytochrome b5 reductase 3 (301 aa).

Gly-2 is lipidated: N-myristoyl glycine. Residues 40 to 152 (DIKYPLRLID…RGPNGLLVYQ (113 aa)) enclose the FAD-binding FR-type domain. Lys-42 bears the N6-acetyllysine mark. Tyr-43 is modified (phosphotyrosine). Lys-50 carries the post-translational modification N6-acetyllysine. Residues Arg-92, Pro-93, Tyr-94, Val-109, Lys-111, and Phe-114 each coordinate FAD. Residue Lys-120 is modified to N6-acetyllysine. Residues Lys-126, Met-127, Ser-128, and Thr-185 each contribute to the FAD site.

Belongs to the flavoprotein pyridine nucleotide cytochrome reductase family. As to quaternary structure, component of a complex composed of cytochrome b5, NADH-cytochrome b5 reductase (CYB5R3) and MTARC2. Interacts with MTLN; the interaction is required to maintain cellular lipid composition and leads to stimulation of mitochondrial respiratory complex I activity. FAD serves as cofactor. Myristoylated. In terms of tissue distribution, ubiquitously expressed. As to expression, expressed only in erythroid tissues, reticulocytes and liver.

It is found in the endoplasmic reticulum membrane. Its subcellular location is the mitochondrion outer membrane. The protein resides in the cytoplasm. The catalysed reaction is 2 Fe(III)-[cytochrome b5] + NADH = 2 Fe(II)-[cytochrome b5] + NAD(+) + H(+). Functionally, catalyzes the reduction of two molecules of cytochrome b5 using NADH as the electron donor. The protein is NADH-cytochrome b5 reductase 3 of Rattus norvegicus (Rat).